A 269-amino-acid polypeptide reads, in one-letter code: Tryptophan synthase alpha chain (269 aa).

Active-site proton acceptor residues include Glu-49 and Asp-60.

It belongs to the TrpA family. Tetramer of two alpha and two beta chains.

It catalyses the reaction (1S,2R)-1-C-(indol-3-yl)glycerol 3-phosphate + L-serine = D-glyceraldehyde 3-phosphate + L-tryptophan + H2O. The protein operates within amino-acid biosynthesis; L-tryptophan biosynthesis; L-tryptophan from chorismate: step 5/5. Its function is as follows. The alpha subunit is responsible for the aldol cleavage of indoleglycerol phosphate to indole and glyceraldehyde 3-phosphate. The polypeptide is Tryptophan synthase alpha chain (Salmonella arizonae (strain ATCC BAA-731 / CDC346-86 / RSK2980)).